We begin with the raw amino-acid sequence, 408 residues long: Probable serine/threonine-protein kinase PBL16 (408 aa).

G2 is lipidated: N-myristoyl glycine. C4 is lipidated: S-palmitoyl cysteine. The disordered stretch occupies residues 17 to 50 (ANAKSESPKEQSPTVEDKHIKEVQKLPSNPKEVE). The span at 18 to 30 (NAKSESPKEQSPT) shows a compositional bias: polar residues. A compositionally biased stretch (basic and acidic residues) spans 31–40 (VEDKHIKEVQ). The residue at position 65 (T65) is a Phosphothreonine. The region spanning 76–360 (FRQDRVLGGG…DIVDSLEPLQ (285 aa)) is the Protein kinase domain. Residues 82–90 (LGGGGFGSV) and K113 each bind ATP. A Phosphotyrosine modification is found at Y159. D209 (proton acceptor) is an active-site residue. Residues S213 and S243 each carry the phosphoserine modification. T244 and T249 each carry phosphothreonine. Phosphotyrosine is present on Y257.

The protein belongs to the protein kinase superfamily. Ser/Thr protein kinase family. In terms of processing, palmitoylation at Cys-4 and Cys-6 are required for plasma membrane location.

It is found in the cell membrane. It catalyses the reaction L-seryl-[protein] + ATP = O-phospho-L-seryl-[protein] + ADP + H(+). It carries out the reaction L-threonyl-[protein] + ATP = O-phospho-L-threonyl-[protein] + ADP + H(+). In terms of biological role, may be involved in plant defense signaling. This chain is Probable serine/threonine-protein kinase PBL16, found in Arabidopsis thaliana (Mouse-ear cress).